We begin with the raw amino-acid sequence, 192 residues long: MITISEAAQAHFVKLLADQPEGTNIRVFVISPGTAQAECGVSYCPPDAVEDDDIELEFNGFNAMVDEKSAPFLEDASIDLVTDQLGSQLTLKAPNAKMRKVSADASLVERIEYVIQAEINPQLASHGGNILLVEVTDDGVAVIQFGGGCNGCSMVDVTLKDGIEKQLLDMFPGELTEVRDATEHQHGSHSYQ.

[4Fe-4S] cluster is bound by residues Cys-149 and Cys-152.

Belongs to the NfuA family. In terms of assembly, homodimer. Requires [4Fe-4S] cluster as cofactor.

Involved in iron-sulfur cluster biogenesis. Binds a 4Fe-4S cluster, can transfer this cluster to apoproteins, and thereby intervenes in the maturation of Fe/S proteins. Could also act as a scaffold/chaperone for damaged Fe/S proteins. This is Fe/S biogenesis protein NfuA from Shewanella amazonensis (strain ATCC BAA-1098 / SB2B).